The following is a 110-amino-acid chain: Vacuolar ATPase assembly integral membrane protein VMA21 (110 aa).

The segment at 1-28 is disordered; sequence MTTRRIIGQDGEEKTYLDVDPRGPPGPS. At 1–44 the chain is on the cytoplasmic side; that stretch reads MTTRRIIGQDGEEKTYLDVDPRGPPGPSNISPAVPASVIWKLMS. Basic and acidic residues predominate over residues 11–21; it reads GEEKTYLDVDP. The helical transmembrane segment at 45-65 threads the bilayer; the sequence is FTFAMITLPIGTYFFTVNYVF. The Lumenal segment spans residues 66–71; the sequence is GGNATY. A helical transmembrane segment spans residues 72–92; it reads AGALAAIMANVVLIAYVIMAF. Over 93–110 the chain is Cytoplasmic; it reads KDDQAEQAEDAREAKKEL. The Prevents secretion from ER signature appears at 107–110; that stretch reads KKEL.

Belongs to the VMA21 family.

It is found in the endoplasmic reticulum membrane. Its subcellular location is the endoplasmic reticulum-Golgi intermediate compartment membrane. The protein resides in the cytoplasmic vesicle. The protein localises to the COPII-coated vesicle membrane. Its function is as follows. Required for the assembly of the V0 complex of the vacuolar ATPase (V-ATPase) in the endoplasmic reticulum. This is Vacuolar ATPase assembly integral membrane protein VMA21 from Phaeosphaeria nodorum (strain SN15 / ATCC MYA-4574 / FGSC 10173) (Glume blotch fungus).